Here is an 816-residue protein sequence, read N- to C-terminus: tRNA(Met) cytidine acetyltransferase TmcA (816 aa).

2 residues coordinate ATP: Q265 and R439. One can recognise an N-acetyltransferase domain in the interval 469–664 (ELIRKMEVYL…YTAIVIKPIS (196 aa)). Residues 589–591 (IAT), E629, and R636 each bind acetyl-CoA.

Belongs to the TmcA family.

The protein resides in the cytoplasm. The enzyme catalyses cytidine(34) in elongator tRNA(Met) + acetyl-CoA + ATP + H2O = N(4)-acetylcytidine(34) in elongator tRNA(Met) + ADP + phosphate + CoA + H(+). It catalyses the reaction a cytidine in RNA + acetyl-CoA + ATP + H2O = an N(4)-acetylcytidine in RNA + ADP + phosphate + CoA + H(+). It carries out the reaction a cytidine in tRNA + acetyl-CoA + ATP + H2O = an N(4)-acetylcytidine in tRNA + ADP + phosphate + CoA + H(+). The catalysed reaction is a cytidine in mRNA + acetyl-CoA + ATP + H2O = an N(4)-acetylcytidine in mRNA + ADP + phosphate + CoA + H(+). Catalyzes the formation of N(4)-acetylcytidine (ac(4)C) at the wobble position of tRNA(Met), by using acetyl-CoA as an acetyl donor and ATP (or GTP). Its function is as follows. Catalyzes the formation of 233 N(4)-acetylcytidine (ac(4)C) sites in RNA, on the middle C of a CCG motif. Modifications are found in rRNA, ncRNA, mRNA and tRNA. More acetylation is observed at 85 than at 65 or 75 degrees Celsius. This Pyrococcus furiosus (strain ATCC 43587 / DSM 3638 / JCM 8422 / Vc1) protein is tRNA(Met) cytidine acetyltransferase TmcA.